A 156-amino-acid chain; its full sequence is uncharacterized protein (156 aa).

A run of 3 helical transmembrane segments spans residues 42–59 (LLMMTFAIVNLADYMTTV), 79–98 (ASFLLLKIAIVATAFALLLY), and 105–127 (SLGRGIYIGLVAGLAISTAVLGI).

The protein localises to the cell membrane. This is an uncharacterized protein from Archaeoglobus fulgidus (strain ATCC 49558 / DSM 4304 / JCM 9628 / NBRC 100126 / VC-16).